The sequence spans 406 residues: Dual-specificity RNA methyltransferase RlmN (406 aa).

The active-site Proton acceptor is Glu121. One can recognise a Radical SAM core domain in the interval Glu127–Leu377. Cys134 and Cys380 are oxidised to a cystine. Residues Cys141, Cys145, and Cys148 each contribute to the [4Fe-4S] cluster site. S-adenosyl-L-methionine-binding positions include Gly206–Glu207, Ser238, Ser260–His262, and Asn337. The S-methylcysteine intermediate role is filled by Cys380.

This sequence belongs to the radical SAM superfamily. RlmN family. [4Fe-4S] cluster is required as a cofactor.

It is found in the cytoplasm. The catalysed reaction is adenosine(2503) in 23S rRNA + 2 reduced [2Fe-2S]-[ferredoxin] + 2 S-adenosyl-L-methionine = 2-methyladenosine(2503) in 23S rRNA + 5'-deoxyadenosine + L-methionine + 2 oxidized [2Fe-2S]-[ferredoxin] + S-adenosyl-L-homocysteine. It carries out the reaction adenosine(37) in tRNA + 2 reduced [2Fe-2S]-[ferredoxin] + 2 S-adenosyl-L-methionine = 2-methyladenosine(37) in tRNA + 5'-deoxyadenosine + L-methionine + 2 oxidized [2Fe-2S]-[ferredoxin] + S-adenosyl-L-homocysteine. Its function is as follows. Specifically methylates position 2 of adenine 2503 in 23S rRNA and position 2 of adenine 37 in tRNAs. m2A2503 modification seems to play a crucial role in the proofreading step occurring at the peptidyl transferase center and thus would serve to optimize ribosomal fidelity. The protein is Dual-specificity RNA methyltransferase RlmN of Azorhizobium caulinodans (strain ATCC 43989 / DSM 5975 / JCM 20966 / LMG 6465 / NBRC 14845 / NCIMB 13405 / ORS 571).